Here is a 396-residue protein sequence, read N- to C-terminus: Tryptophan synthase beta chain (396 aa).

Lys86 is subject to N6-(pyridoxal phosphate)lysine.

It belongs to the TrpB family. In terms of assembly, tetramer of two alpha and two beta chains. Pyridoxal 5'-phosphate serves as cofactor.

It carries out the reaction (1S,2R)-1-C-(indol-3-yl)glycerol 3-phosphate + L-serine = D-glyceraldehyde 3-phosphate + L-tryptophan + H2O. The protein operates within amino-acid biosynthesis; L-tryptophan biosynthesis; L-tryptophan from chorismate: step 5/5. In terms of biological role, the beta subunit is responsible for the synthesis of L-tryptophan from indole and L-serine. The chain is Tryptophan synthase beta chain from Vibrio vulnificus (strain CMCP6).